A 356-amino-acid polypeptide reads, in one-letter code: Dual-specificity RNA methyltransferase RlmN (356 aa).

Residue glutamate 89 is the Proton acceptor of the active site. The Radical SAM core domain occupies 108 to 341; it reads SHARYTICVS…CTIRESKGLD (234 aa). Cysteine 115 and cysteine 346 are oxidised to a cystine. 3 residues coordinate [4Fe-4S] cluster: cysteine 122, cysteine 126, and cysteine 129. Residues 172-173, serine 204, 227-229, and asparagine 303 contribute to the S-adenosyl-L-methionine site; these read GE and SLH. Cysteine 346 functions as the S-methylcysteine intermediate in the catalytic mechanism.

Belongs to the radical SAM superfamily. RlmN family. Requires [4Fe-4S] cluster as cofactor.

It localises to the cytoplasm. It catalyses the reaction adenosine(2503) in 23S rRNA + 2 reduced [2Fe-2S]-[ferredoxin] + 2 S-adenosyl-L-methionine = 2-methyladenosine(2503) in 23S rRNA + 5'-deoxyadenosine + L-methionine + 2 oxidized [2Fe-2S]-[ferredoxin] + S-adenosyl-L-homocysteine. The catalysed reaction is adenosine(37) in tRNA + 2 reduced [2Fe-2S]-[ferredoxin] + 2 S-adenosyl-L-methionine = 2-methyladenosine(37) in tRNA + 5'-deoxyadenosine + L-methionine + 2 oxidized [2Fe-2S]-[ferredoxin] + S-adenosyl-L-homocysteine. Its function is as follows. Specifically methylates position 2 of adenine 2503 in 23S rRNA and position 2 of adenine 37 in tRNAs. m2A2503 modification seems to play a crucial role in the proofreading step occurring at the peptidyl transferase center and thus would serve to optimize ribosomal fidelity. This chain is Dual-specificity RNA methyltransferase RlmN, found in Campylobacter jejuni subsp. jejuni serotype O:23/36 (strain 81-176).